The sequence spans 111 residues: Large ribosomal subunit protein uL22 (111 aa).

It belongs to the universal ribosomal protein uL22 family. As to quaternary structure, part of the 50S ribosomal subunit.

Its function is as follows. This protein binds specifically to 23S rRNA; its binding is stimulated by other ribosomal proteins, e.g. L4, L17, and L20. It is important during the early stages of 50S assembly. It makes multiple contacts with different domains of the 23S rRNA in the assembled 50S subunit and ribosome. In terms of biological role, the globular domain of the protein is located near the polypeptide exit tunnel on the outside of the subunit, while an extended beta-hairpin is found that lines the wall of the exit tunnel in the center of the 70S ribosome. The chain is Large ribosomal subunit protein uL22 from Mycoplasma capricolum subsp. capricolum (strain California kid / ATCC 27343 / NCTC 10154).